The sequence spans 429 residues: MYRSHFIADVTPEYDGKEVIWAGWVHLLRDLGGKKFIILRDKTGLGQVVVDKNSSAFGISQELTQESVIQVRGIVKADKRAPRGIELHAEEITLLSKAKAPLPLDVSGKVKADIDTRLRERVLDLRRQEMQAVIKIQSLALKAFRETLYKEGFIEIFTPKIIASATEGGAQLFPVIYFGKEAFLAQSPQLYKELMAGVVERVFEVAPAWRAEESDTPFHLAEFISMDVEMAFADYNDVMQLLEKILHNIVKTIKEEGKEELKILNYEPPEVKIPIKRLKYTEAIEILRSKGYNIKFGDDIGTPELRILNEELKEDLYFIVDWPSDARPFYTKSKSENPELSESFDLIYKFLEIVSGSTRNHKREVLEEALKKKGLKPESFEFFLKWFDYGMPPHAGFGMGLARLMVMLTGIQSVKEIVPFPRDKKRLTP.

E167 lines the L-aspartate pocket. The interval 189–192 (QLYK) is aspartate. Position 210 (R210) interacts with L-aspartate. ATP-binding positions include 210–212 (RAE) and E352. Positions 352 and 355 each coordinate Mg(2+). L-aspartate-binding residues include S355 and R359. 400 to 403 (GLAR) contributes to the ATP binding site.

It belongs to the class-II aminoacyl-tRNA synthetase family. Type 2 subfamily. Homodimer. Mg(2+) serves as cofactor.

The protein resides in the cytoplasm. It carries out the reaction tRNA(Asx) + L-aspartate + ATP = L-aspartyl-tRNA(Asx) + AMP + diphosphate. Its function is as follows. Aspartyl-tRNA synthetase with relaxed tRNA specificity since it is able to aspartylate not only its cognate tRNA(Asp) but also tRNA(Asn). Reaction proceeds in two steps: L-aspartate is first activated by ATP to form Asp-AMP and then transferred to the acceptor end of tRNA(Asp/Asn). This is Aspartate--tRNA(Asp/Asn) ligase from Sulfurisphaera tokodaii (strain DSM 16993 / JCM 10545 / NBRC 100140 / 7) (Sulfolobus tokodaii).